Here is a 157-residue protein sequence, read N- to C-terminus: Small ribosomal subunit protein uS7 (157 aa).

This sequence belongs to the universal ribosomal protein uS7 family. As to quaternary structure, part of the 30S ribosomal subunit. Contacts proteins S9 and S11.

Its function is as follows. One of the primary rRNA binding proteins, it binds directly to 16S rRNA where it nucleates assembly of the head domain of the 30S subunit. Is located at the subunit interface close to the decoding center, probably blocks exit of the E-site tRNA. This Roseiflexus sp. (strain RS-1) protein is Small ribosomal subunit protein uS7.